Consider the following 151-residue polypeptide: SsrA-binding protein (151 aa).

The protein belongs to the SmpB family.

Its subcellular location is the cytoplasm. Required for rescue of stalled ribosomes mediated by trans-translation. Binds to transfer-messenger RNA (tmRNA), required for stable association of tmRNA with ribosomes. tmRNA and SmpB together mimic tRNA shape, replacing the anticodon stem-loop with SmpB. tmRNA is encoded by the ssrA gene; the 2 termini fold to resemble tRNA(Ala) and it encodes a 'tag peptide', a short internal open reading frame. During trans-translation Ala-aminoacylated tmRNA acts like a tRNA, entering the A-site of stalled ribosomes, displacing the stalled mRNA. The ribosome then switches to translate the ORF on the tmRNA; the nascent peptide is terminated with the 'tag peptide' encoded by the tmRNA and targeted for degradation. The ribosome is freed to recommence translation, which seems to be the essential function of trans-translation. The protein is SsrA-binding protein of Campylobacter fetus subsp. fetus (strain 82-40).